The chain runs to 214 residues: Osteoclast-stimulating factor 1 (214 aa).

The SH3 domain occupies 12–71 (GQVKVFRALFTFDPRTPDELYFEEGDILYISDTSDTNWWKGTCRGRTGLIPSNYVAEQAE). 3 ANK repeats span residues 72 to 101 (TIDH…GING), 105 to 135 (AGNT…ELNQ), and 139 to 168 (LGDT…RTDI).

Ubiquitously expressed.

It is found in the cytoplasm. Its function is as follows. Induces bone resorption, acting probably through a signaling cascade which results in the secretion of factor(s) enhancing osteoclast formation and activity. The polypeptide is Osteoclast-stimulating factor 1 (ostf1) (Monopterus albus (Swamp eel)).